The following is a 342-amino-acid chain: Probable dual-specificity RNA methyltransferase RlmN (342 aa).

The Proton acceptor role is filled by Glu91. Residues 97 to 327 (YKHGNSICVS…TTIRREMGAD (231 aa)) form the Radical SAM core domain. Cys104 and Cys332 are oxidised to a cystine. [4Fe-4S] cluster contacts are provided by Cys111, Cys115, and Cys118. S-adenosyl-L-methionine is bound by residues 158–159 (GE), Ser190, 213–215 (SLH), and Asn289. Cys332 acts as the S-methylcysteine intermediate in catalysis.

It belongs to the radical SAM superfamily. RlmN family. Requires [4Fe-4S] cluster as cofactor.

It localises to the cytoplasm. The catalysed reaction is adenosine(2503) in 23S rRNA + 2 reduced [2Fe-2S]-[ferredoxin] + 2 S-adenosyl-L-methionine = 2-methyladenosine(2503) in 23S rRNA + 5'-deoxyadenosine + L-methionine + 2 oxidized [2Fe-2S]-[ferredoxin] + S-adenosyl-L-homocysteine. It catalyses the reaction adenosine(37) in tRNA + 2 reduced [2Fe-2S]-[ferredoxin] + 2 S-adenosyl-L-methionine = 2-methyladenosine(37) in tRNA + 5'-deoxyadenosine + L-methionine + 2 oxidized [2Fe-2S]-[ferredoxin] + S-adenosyl-L-homocysteine. In terms of biological role, specifically methylates position 2 of adenine 2503 in 23S rRNA and position 2 of adenine 37 in tRNAs. The chain is Probable dual-specificity RNA methyltransferase RlmN from Clostridium botulinum (strain ATCC 19397 / Type A).